A 66-amino-acid polypeptide reads, in one-letter code: Large ribosomal subunit protein bL35 (66 aa).

Belongs to the bacterial ribosomal protein bL35 family.

This chain is Large ribosomal subunit protein bL35, found in Borreliella afzelii (strain PKo) (Borrelia afzelii).